The primary structure comprises 645 residues: DNA ligase (645 aa).

NAD(+)-binding positions include 30-34 (DIEYD), 79-80 (SM), and Glu106. The active-site N6-AMP-lysine intermediate is the Lys108. NAD(+)-binding residues include Arg129, Glu163, and Lys302. The Zn(2+) site is built by Cys396, Cys399, Cys412, and Cys417. The BRCT domain maps to 570-645 (ISQNVFTKKT…ISEDEFKEML (76 aa)).

It belongs to the NAD-dependent DNA ligase family. LigA subfamily. Requires Mg(2+) as cofactor. It depends on Mn(2+) as a cofactor.

The catalysed reaction is NAD(+) + (deoxyribonucleotide)n-3'-hydroxyl + 5'-phospho-(deoxyribonucleotide)m = (deoxyribonucleotide)n+m + AMP + beta-nicotinamide D-nucleotide.. Functionally, DNA ligase that catalyzes the formation of phosphodiester linkages between 5'-phosphoryl and 3'-hydroxyl groups in double-stranded DNA using NAD as a coenzyme and as the energy source for the reaction. It is essential for DNA replication and repair of damaged DNA. The chain is DNA ligase from Campylobacter hominis (strain ATCC BAA-381 / DSM 21671 / CCUG 45161 / LMG 19568 / NCTC 13146 / CH001A).